Consider the following 503-residue polypeptide: Probable cytosol aminopeptidase (503 aa).

Mn(2+) is bound by residues Lys270 and Asp275. The active site involves Lys282. The Mn(2+) site is built by Asp293, Asp352, and Glu354. The active site involves Arg356.

This sequence belongs to the peptidase M17 family. Requires Mn(2+) as cofactor.

Its subcellular location is the cytoplasm. The enzyme catalyses Release of an N-terminal amino acid, Xaa-|-Yaa-, in which Xaa is preferably Leu, but may be other amino acids including Pro although not Arg or Lys, and Yaa may be Pro. Amino acid amides and methyl esters are also readily hydrolyzed, but rates on arylamides are exceedingly low.. It carries out the reaction Release of an N-terminal amino acid, preferentially leucine, but not glutamic or aspartic acids.. In terms of biological role, presumably involved in the processing and regular turnover of intracellular proteins. Catalyzes the removal of unsubstituted N-terminal amino acids from various peptides. The chain is Probable cytosol aminopeptidase from Escherichia coli O139:H28 (strain E24377A / ETEC).